The primary structure comprises 507 residues: ATP synthase subunit alpha, chloroplastic (507 aa).

170–177 (GDRQTGKT) is a binding site for ATP.

It belongs to the ATPase alpha/beta chains family. F-type ATPases have 2 components, CF(1) - the catalytic core - and CF(0) - the membrane proton channel. CF(1) has five subunits: alpha(3), beta(3), gamma(1), delta(1), epsilon(1). CF(0) has four main subunits: a, b, b' and c.

Its subcellular location is the plastid. It is found in the chloroplast thylakoid membrane. The catalysed reaction is ATP + H2O + 4 H(+)(in) = ADP + phosphate + 5 H(+)(out). Its function is as follows. Produces ATP from ADP in the presence of a proton gradient across the membrane. The alpha chain is a regulatory subunit. The protein is ATP synthase subunit alpha, chloroplastic of Oryza nivara (Indian wild rice).